A 273-amino-acid polypeptide reads, in one-letter code: Bifunctional protein FolD (273 aa).

NADP(+) is bound by residues 155–157 (GRS), Ser182, and Ile223.

It belongs to the tetrahydrofolate dehydrogenase/cyclohydrolase family. As to quaternary structure, homodimer.

It catalyses the reaction (6R)-5,10-methylene-5,6,7,8-tetrahydrofolate + NADP(+) = (6R)-5,10-methenyltetrahydrofolate + NADPH. It carries out the reaction (6R)-5,10-methenyltetrahydrofolate + H2O = (6R)-10-formyltetrahydrofolate + H(+). It participates in one-carbon metabolism; tetrahydrofolate interconversion. Its function is as follows. Catalyzes the oxidation of 5,10-methylenetetrahydrofolate to 5,10-methenyltetrahydrofolate and then the hydrolysis of 5,10-methenyltetrahydrofolate to 10-formyltetrahydrofolate. The polypeptide is Bifunctional protein FolD (Pseudothermotoga lettingae (strain ATCC BAA-301 / DSM 14385 / NBRC 107922 / TMO) (Thermotoga lettingae)).